The chain runs to 1236 residues: ATP-dependent helicase/nuclease subunit A (1236 aa).

Residues 2–457 form the UvrD-like helicase ATP-binding domain; the sequence is AHWTIEQEEA…VDLNKNFRSH (456 aa). 23 to 30 provides a ligand contact to ATP; that stretch reads AAAGSGKT. Residues 515-816 form the UvrD-like helicase C-terminal domain; sequence NTAKRVEICI…RIMSIHKSKG (302 aa).

The protein belongs to the helicase family. AddA subfamily. In terms of assembly, heterodimer of AddA and AddB/RexB. The cofactor is Mg(2+).

It carries out the reaction Couples ATP hydrolysis with the unwinding of duplex DNA by translocating in the 3'-5' direction.. The enzyme catalyses ATP + H2O = ADP + phosphate + H(+). Functionally, the heterodimer acts as both an ATP-dependent DNA helicase and an ATP-dependent, dual-direction single-stranded exonuclease. Recognizes the chi site generating a DNA molecule suitable for the initiation of homologous recombination. The AddA nuclease domain is required for chi fragment generation; this subunit has the helicase and 3' -&gt; 5' nuclease activities. This chain is ATP-dependent helicase/nuclease subunit A, found in Syntrophomonas wolfei subsp. wolfei (strain DSM 2245B / Goettingen).